The sequence spans 349 residues: RxLR effector protein CRE15 (349 aa).

Residues 1-33 form the signal peptide; the sequence is MITFKRLSSARWGALLTSIAVLFFLAITKGADA. The short motif at 46-62 is the RxLR-dEER element; the sequence is RRLRTTTADAYYASEDR.

It belongs to the RxLR effector family. Interacts directly with the potato ortholog of vascular highway 1 (VH1)-interacting kinase (VIK), encoding a predicted MEK kinase (MAP3K).

Its subcellular location is the secreted. It is found in the host cell membrane. Functionally, effector that promotes P.infestans virulence in Nicotiana benthamiana and potato. Attenuates cell death triggered by the pathogen-associated molecular pattern infestin 1 (INF1), indicating that the effector suppresses pattern-triggered immunity. However, it does not attenuate cell death triggered by a range of resistance proteins, suggesting that it specifically suppresses INF1-triggered cell death (ICD). Targets host MAP3K VIK in order to utilize or promote its ability to negatively regulate immunity. The polypeptide is RxLR effector protein CRE15 (Phytophthora infestans (strain T30-4) (Potato late blight agent)).